Consider the following 304-residue polypeptide: tRNA U34 carboxymethyltransferase (304 aa).

Carboxy-S-adenosyl-L-methionine contacts are provided by residues Lys-73, Trp-87, Lys-92, Gly-111, 133 to 135 (DPS), 160 to 161 (VE), Tyr-180, and Arg-295.

It belongs to the class I-like SAM-binding methyltransferase superfamily. CmoB family. Homotetramer.

It carries out the reaction carboxy-S-adenosyl-L-methionine + 5-hydroxyuridine(34) in tRNA = 5-carboxymethoxyuridine(34) in tRNA + S-adenosyl-L-homocysteine + H(+). Its function is as follows. Catalyzes carboxymethyl transfer from carboxy-S-adenosyl-L-methionine (Cx-SAM) to 5-hydroxyuridine (ho5U) to form 5-carboxymethoxyuridine (cmo5U) at position 34 in tRNAs. The chain is tRNA U34 carboxymethyltransferase from Aliarcobacter butzleri (strain RM4018) (Arcobacter butzleri).